Consider the following 255-residue polypeptide: Hydroxyacylglutathione hydrolase (255 aa).

Residues H56, H58, D60, H61, H114, D133, and H171 each contribute to the Zn(2+) site.

Belongs to the metallo-beta-lactamase superfamily. Glyoxalase II family. As to quaternary structure, monomer. The cofactor is Zn(2+).

The catalysed reaction is an S-(2-hydroxyacyl)glutathione + H2O = a 2-hydroxy carboxylate + glutathione + H(+). It participates in secondary metabolite metabolism; methylglyoxal degradation; (R)-lactate from methylglyoxal: step 2/2. Its function is as follows. Thiolesterase that catalyzes the hydrolysis of S-D-lactoyl-glutathione to form glutathione and D-lactic acid. The protein is Hydroxyacylglutathione hydrolase of Rhodopseudomonas palustris (strain BisB5).